A 287-amino-acid chain; its full sequence is Octanoyl-[GcvH]:protein N-octanoyltransferase (287 aa).

The BPL/LPL catalytic domain maps to Gly-45–Tyr-253. The active-site Acyl-thioester intermediate is the Cys-150.

This sequence belongs to the octanoyltransferase LipL family.

The catalysed reaction is N(6)-octanoyl-L-lysyl-[glycine-cleavage complex H protein] + L-lysyl-[lipoyl-carrier protein] = N(6)-octanoyl-L-lysyl-[lipoyl-carrier protein] + L-lysyl-[glycine-cleavage complex H protein]. It functions in the pathway protein modification; protein lipoylation via endogenous pathway; protein N(6)-(lipoyl)lysine from octanoyl-[acyl-carrier-protein]. In terms of biological role, catalyzes the amidotransfer (transamidation) of the octanoyl moiety from octanoyl-GcvH to the lipoyl domain of the E2 subunit of lipoate-dependent enzymes. The sequence is that of Octanoyl-[GcvH]:protein N-octanoyltransferase from Bacillus velezensis (strain DSM 23117 / BGSC 10A6 / LMG 26770 / FZB42) (Bacillus amyloliquefaciens subsp. plantarum).